We begin with the raw amino-acid sequence, 463 residues long: tRNA-2-methylthio-N(6)-dimethylallyladenosine synthase (463 aa).

Positions 5 to 125 (RKLHIKSYGC…LPQLLAKAEQ (121 aa)) constitute an MTTase N-terminal domain. Residues C14, C50, C88, C166, C170, and C173 each coordinate [4Fe-4S] cluster. A Radical SAM core domain is found at 152–384 (RARGISAFVT…QQLIDQQQSA (233 aa)). Residues 387-449 (KAAIGRTVEV…RYSLLGELAS (63 aa)) form the TRAM domain.

Belongs to the methylthiotransferase family. MiaB subfamily. As to quaternary structure, monomer. [4Fe-4S] cluster is required as a cofactor.

Its subcellular location is the cytoplasm. The catalysed reaction is N(6)-dimethylallyladenosine(37) in tRNA + (sulfur carrier)-SH + AH2 + 2 S-adenosyl-L-methionine = 2-methylsulfanyl-N(6)-dimethylallyladenosine(37) in tRNA + (sulfur carrier)-H + 5'-deoxyadenosine + L-methionine + A + S-adenosyl-L-homocysteine + 2 H(+). Its function is as follows. Catalyzes the methylthiolation of N6-(dimethylallyl)adenosine (i(6)A), leading to the formation of 2-methylthio-N6-(dimethylallyl)adenosine (ms(2)i(6)A) at position 37 in tRNAs that read codons beginning with uridine. In Rhodopseudomonas palustris (strain TIE-1), this protein is tRNA-2-methylthio-N(6)-dimethylallyladenosine synthase.